The primary structure comprises 4194 residues: Hybrid PKS-NRPS synthetase pydA (4194 aa).

Residues 14-450 enclose the Ketosynthase family 3 (KS3) domain; it reads REPIAVVGSG…GTNAHAIVEN (437 aa). Catalysis depends on for beta-ketoacyl synthase activity residues Cys187, His326, and His370. Residues 565–887 form the Malonyl-CoA:ACP transacylase (MAT) domain; it reads VFTGQGAQWA…QRGKDDVQAF (323 aa). Residues 953 to 1088 are N-terminal hotdog fold; that stretch reads HPLLGTRTTD…GRVIVITGEA (136 aa). The region spanning 953-1257 is the PKS/mFAS DH domain; the sequence is HPLLGTRTTD…VVSFSEPTAE (305 aa). His985 serves as the catalytic Proton acceptor; for dehydratase activity. The C-terminal hotdog fold stretch occupies residues 1103–1257; it reads LVDIPEDRFY…VVSFSEPTAE (155 aa). The active-site Proton donor; for dehydratase activity is Asp1163. Residues 1302 to 1596 are methyltransferase (cMeT) domain; that stretch reads YMRQLASLFP…FSGVDSTTHE (295 aa). A Ketoreductase (KR) domain is found at 2141–2314; that stretch reads TYVFFGLTSD…AGSILHIGAV (174 aa). Residues 2421-2505 enclose the Carrier 1 domain; it reads TTAEEALEIV…ELVEFAVENM (85 aa). Position 2465 is an O-(pantetheine 4'-phosphoryl)serine (Ser2465). The interval 2512–2583 is disordered; sequence NMSDSLNAVP…ERDSSTASLE (72 aa). Positions 2526 to 2547 are enriched in low complexity; that stretch reads APVIPASPPSGSVSSAPSSDPP. The segment covering 2550-2565 has biased composition (polar residues); it reads TAETSQHLSESSSKTS. The segment covering 2566–2577 has biased composition (basic and acidic residues); it reads QPDEKQSEERDS. Residues 2591 to 3023 are condensation; that stretch reads EKVLPVSPGQ…QILKDVSLFT (433 aa). The adenylation stretch occupies residues 3056-3467; the sequence is ANPPQEIALR…RIEGDTQIKL (412 aa). The region spanning 3580–3660 is the Carrier 2 domain; the sequence is TQLTEAESEL…AMAAVIQDLS (81 aa). Residue Ser3620 is modified to O-(pantetheine 4'-phosphoryl)serine. Residues 3701 to 3920 enclose the Thioester reductase (TE) domain; that stretch reads ITGATGFLGK…VDLISVERAA (220 aa). 2 disordered regions span residues 4031–4110 and 4163–4194; these read RRDK…DEQI and KGEYPCGSDGREEAEEAEWQCDEGHGDGEPDD. The span at 4057–4072 shows a compositional bias: basic and acidic residues; that stretch reads RGRDVSPRHPALDHPD. The segment covering 4174–4183 has biased composition (acidic residues); it reads EEAEEAEWQC. The segment covering 4184–4194 has biased composition (basic and acidic residues); it reads DEGHGDGEPDD.

This sequence in the C-terminal section; belongs to the NRP synthetase family. The cofactor is pantetheine 4'-phosphate.

It functions in the pathway mycotoxin biosynthesis. Hybrid PKS-NRPS synthetase; part of the gene cluster that mediates the biosynthesis of pyrrocidines, fungal natural products containing a macrocyclic para-cyclophane connected to a decahydrofluorene ring system that show potent antibiotic activities toward Gram-negative bacteria. Within the pathway, the PKS-NRPS pydA, with the help of the trans-enoyl reductase pydC, synthesize the polyketide-tyrosyl acyl thioester product which can be reductively off-loaded by the terminal reductase (R) domain in pydA. The PKS module of pydA acts in combination with the trans-acting enoyl reductase pydC to produce a methylated polyketide attached to the ACP domain. In parallel, the adenylation (A) domain of the NRPS module activated L-tyrosine, which is then transferred to the ACP domain. The condensation (C) domain subsequently link this group to the polyketide chain, forming an enzyme-bound amide. The alpha/beta hydrolase pydG is then required to catalyze the subsequent Knoevenagel condensation that affords the 3-pyrrolin-2-one ring, whereas the four proteins pydB, pydE, pydX and pydZ then function synergistically to form the cyclophane. PydB and the membrane-bound pydX and pydZ are lipid-binding proteins that can sequester and mold the pdyG product into the inverse S-shape. Binding of the medium chain reductase pydE to the complex would trigger the cascade oxidative cyclization. PydY is involved in the Diels-Alder cycloaddition that forms the decahydrofluorene core. Additional non-enzymatic hydroxylation yields pyrrocidine A2 which can be further reduced into pyrrocidine B by an endogenous reductase. The protein is Hybrid PKS-NRPS synthetase pydA of Acremonium sp.